The following is a 326-amino-acid chain: Apolipoprotein F (326 aa).

Residues 1–35 (MTGLCGYSAPDMRGLRLIMIPVELLLCYLLLHPVD) form the signal peptide. Residues 36–164 (ATSYGKQTNV…EQQSTGRVGR (129 aa)) constitute a propeptide that is removed on maturation. Asn-118 carries N-linked (GlcNAc...) asparagine glycosylation. Thr-274 carries O-linked (GalNAc...) threonine glycosylation. Ser-323 bears the Phosphoserine mark.

Belongs to the apolipoprotein F family. O-glycosylated with core 1 or possibly core 8 glycans. In terms of tissue distribution, expressed by the liver and secreted in plasma.

The protein localises to the secreted. Functionally, minor apolipoprotein that associates with LDL. Inhibits cholesteryl ester transfer protein (CETP) activity and appears to be an important regulator of cholesterol transport. Also associates to a lesser degree with VLDL, Apo-AI and Apo-AII. The protein is Apolipoprotein F (APOF) of Homo sapiens (Human).